Reading from the N-terminus, the 313-residue chain is tRNA dimethylallyltransferase (313 aa).

11–18 (GPTAGGKT) contacts ATP. 13–18 (TAGGKT) contacts substrate. 3 interaction with substrate tRNA regions span residues 36–39 (DSAL), 160–164 (QRIGR), and 243–248 (RCVGYR).

The protein belongs to the IPP transferase family. Monomer. The cofactor is Mg(2+).

It catalyses the reaction adenosine(37) in tRNA + dimethylallyl diphosphate = N(6)-dimethylallyladenosine(37) in tRNA + diphosphate. Catalyzes the transfer of a dimethylallyl group onto the adenine at position 37 in tRNAs that read codons beginning with uridine, leading to the formation of N6-(dimethylallyl)adenosine (i(6)A). The polypeptide is tRNA dimethylallyltransferase (Neisseria meningitidis serogroup C / serotype 2a (strain ATCC 700532 / DSM 15464 / FAM18)).